A 108-amino-acid chain; its full sequence is MFKTTLLFFITALCEIIGCFLPWLWLKRNGSIWLLLPAGVSLAFFVWLLTLHPAASGRVYAAYGGVYVCTALLWLRFIDGVKLSLYDWSGALIALCGMLIIVAGWGRA.

Residues 1–5 are Periplasmic-facing; sequence MFKTT. Residues 6-26 form a helical membrane-spanning segment; sequence LLFFITALCEIIGCFLPWLWL. At 27–30 the chain is on the cytoplasmic side; the sequence is KRNG. The helical transmembrane segment at 31-51 threads the bilayer; sequence SIWLLLPAGVSLAFFVWLLTL. Residues 52–60 lie on the Periplasmic side of the membrane; the sequence is HPAASGRVY. Residues 61-81 form a helical membrane-spanning segment; it reads AAYGGVYVCTALLWLRFIDGV. Over 82–84 the chain is Cytoplasmic; sequence KLS. The chain crosses the membrane as a helical span at residues 85–105; sequence LYDWSGALIALCGMLIIVAGW. The Periplasmic segment spans residues 106-108; it reads GRA.

It belongs to the UPF0060 family.

It localises to the cell inner membrane. In Escherichia fergusonii (strain ATCC 35469 / DSM 13698 / CCUG 18766 / IAM 14443 / JCM 21226 / LMG 7866 / NBRC 102419 / NCTC 12128 / CDC 0568-73), this protein is UPF0060 membrane protein YnfA.